Here is a 238-residue protein sequence, read N- to C-terminus: uncharacterized protein (238 aa).

A run of 3 helical transmembrane segments spans residues 75–95 (YAIF…HNFY), 116–136 (IVLI…FSLI), and 172–192 (IQGL…LEVI). Residues 200–238 (DVEMSSMRGQAITTEPASDNTMAEETDCNTSKDVESGSN) form a disordered region. The span at 206 to 220 (MRGQAITTEPASDNT) shows a compositional bias: polar residues. The segment covering 229–238 (TSKDVESGSN) has biased composition (basic and acidic residues).

Its subcellular location is the membrane. This is an uncharacterized protein from Schizosaccharomyces pombe (strain 972 / ATCC 24843) (Fission yeast).